We begin with the raw amino-acid sequence, 100 residues long: MSDNLCGGLPPEICEQLNKEEQFIKIKVEKRRYGKEVTIIEGLSGSDVELKKIASELKSKLAAGGTVKNGKIELQGDHRERVKELLMKMGYPESNIIIIE.

It belongs to the SUI1 family.

The chain is Protein translation factor SUI1 homolog from Sulfurisphaera tokodaii (strain DSM 16993 / JCM 10545 / NBRC 100140 / 7) (Sulfolobus tokodaii).